Consider the following 88-residue polypeptide: MQAARFVVSGVVQGVWYRASTRERAVALGLVGHARNQTDGSVEVVAAGSAAALGALEAWLWQGPPAATVEAVTRTPCAVPPTEDFVTG.

The region spanning 3–88 (AARFVVSGVV…VPPTEDFVTG (86 aa)) is the Acylphosphatase-like domain. Active-site residues include Arg-18 and Asn-36.

This sequence belongs to the acylphosphatase family.

The catalysed reaction is an acyl phosphate + H2O = a carboxylate + phosphate + H(+). In Xanthomonas oryzae pv. oryzae (strain MAFF 311018), this protein is Acylphosphatase (acyP).